Consider the following 274-residue polypeptide: Proteasome subunit beta type-7-B (274 aa).

Residues 1–37 (MSQSSVDIPPKGGFSFDLCKRNDMLTQKGLKAPSFLK) constitute a propeptide, removed in mature form. The active-site Nucleophile is Thr-40.

This sequence belongs to the peptidase T1B family. In terms of assembly, component of the 20S core complex of the 26S proteasome. The 26S proteasome is composed of a core protease (CP), known as the 20S proteasome, capped at one or both ends by the 19S regulatory particle (RP/PA700). The 20S proteasome core is composed of 28 subunits that are arranged in four stacked rings, resulting in a barrel-shaped structure. The two end rings are each formed by seven alpha subunits, and the two central rings are each formed by seven beta subunits. The catalytic chamber with the active sites is on the inside of the barrel.

It localises to the cytoplasm. The protein resides in the nucleus. The enzyme catalyses Cleavage of peptide bonds with very broad specificity.. Functionally, the proteasome is a multicatalytic proteinase complex which is characterized by its ability to cleave peptides with Arg, Phe, Tyr, Leu, and Glu adjacent to the leaving group at neutral or slightly basic pH. The proteasome has an ATP-dependent proteolytic activity. The protein is Proteasome subunit beta type-7-B (PBB2) of Arabidopsis thaliana (Mouse-ear cress).